We begin with the raw amino-acid sequence, 114 residues long: Hydrogenase maturation factor HypA (114 aa).

Residue His2 participates in Ni(2+) binding. The Zn(2+) site is built by Cys70, Cys73, Cys86, and Cys89.

It belongs to the HypA/HybF family.

In terms of biological role, involved in the maturation of [NiFe] hydrogenases. Required for nickel insertion into the metal center of the hydrogenase. This is Hydrogenase maturation factor HypA from Crocosphaera subtropica (strain ATCC 51142 / BH68) (Cyanothece sp. (strain ATCC 51142)).